The primary structure comprises 248 residues: Adenosylcobinamide-GDP ribazoletransferase (248 aa).

6 helical membrane-spanning segments follow: residues 36 to 56 (FFLPVVAFIIGGMEFLIYLGL), 59 to 79 (FLPANVIIVLLILFTAMITGG), 114 to 134 (GTIALIIDLLLKYQLLYSLVL), 137 to 157 (YSIAIVLAPIIGRISILFLCL), 170 to 190 (IFIGNMSKPIIFFITTIVLVL), and 199 to 219 (ATIIPFIGVLLITYLLYLLCL).

The protein belongs to the CobS family. It depends on Mg(2+) as a cofactor.

It localises to the cell membrane. It catalyses the reaction alpha-ribazole + adenosylcob(III)inamide-GDP = adenosylcob(III)alamin + GMP + H(+). It carries out the reaction alpha-ribazole 5'-phosphate + adenosylcob(III)inamide-GDP = adenosylcob(III)alamin 5'-phosphate + GMP + H(+). It functions in the pathway cofactor biosynthesis; adenosylcobalamin biosynthesis; adenosylcobalamin from cob(II)yrinate a,c-diamide: step 7/7. Joins adenosylcobinamide-GDP and alpha-ribazole to generate adenosylcobalamin (Ado-cobalamin). Also synthesizes adenosylcobalamin 5'-phosphate from adenosylcobinamide-GDP and alpha-ribazole 5'-phosphate. The chain is Adenosylcobinamide-GDP ribazoletransferase from Clostridium botulinum (strain Langeland / NCTC 10281 / Type F).